Reading from the N-terminus, the 156-residue chain is Large ribosomal subunit protein uL22c (156 aa).

Belongs to the universal ribosomal protein uL22 family. As to quaternary structure, part of the 50S ribosomal subunit.

The protein resides in the plastid. Its subcellular location is the chloroplast. In terms of biological role, this protein binds specifically to 23S rRNA. The globular domain of the protein is located near the polypeptide exit tunnel on the outside of the subunit, while an extended beta-hairpin is found that lines the wall of the exit tunnel in the center of the 70S ribosome. In Buxus microphylla (Littleleaf boxwood), this protein is Large ribosomal subunit protein uL22c (rpl22).